A 213-amino-acid polypeptide reads, in one-letter code: Thiamine-phosphate synthase (213 aa).

Residues 39–43 (QYRDK) and Asp71 each bind 4-amino-2-methyl-5-(diphosphooxymethyl)pyrimidine. Mg(2+) contacts are provided by Asp72 and Asp91. Ser108 contributes to the 4-amino-2-methyl-5-(diphosphooxymethyl)pyrimidine binding site. A 2-[(2R,5Z)-2-carboxy-4-methylthiazol-5(2H)-ylidene]ethyl phosphate-binding site is contributed by 135 to 137 (TDT). Lys138 contacts 4-amino-2-methyl-5-(diphosphooxymethyl)pyrimidine. 2-[(2R,5Z)-2-carboxy-4-methylthiazol-5(2H)-ylidene]ethyl phosphate contacts are provided by residues Gly165 and 185–186 (VS).

Belongs to the thiamine-phosphate synthase family. Mg(2+) serves as cofactor.

It catalyses the reaction 2-[(2R,5Z)-2-carboxy-4-methylthiazol-5(2H)-ylidene]ethyl phosphate + 4-amino-2-methyl-5-(diphosphooxymethyl)pyrimidine + 2 H(+) = thiamine phosphate + CO2 + diphosphate. The catalysed reaction is 2-(2-carboxy-4-methylthiazol-5-yl)ethyl phosphate + 4-amino-2-methyl-5-(diphosphooxymethyl)pyrimidine + 2 H(+) = thiamine phosphate + CO2 + diphosphate. It carries out the reaction 4-methyl-5-(2-phosphooxyethyl)-thiazole + 4-amino-2-methyl-5-(diphosphooxymethyl)pyrimidine + H(+) = thiamine phosphate + diphosphate. It participates in cofactor biosynthesis; thiamine diphosphate biosynthesis; thiamine phosphate from 4-amino-2-methyl-5-diphosphomethylpyrimidine and 4-methyl-5-(2-phosphoethyl)-thiazole: step 1/1. In terms of biological role, condenses 4-methyl-5-(beta-hydroxyethyl)thiazole monophosphate (THZ-P) and 2-methyl-4-amino-5-hydroxymethyl pyrimidine pyrophosphate (HMP-PP) to form thiamine monophosphate (TMP). The polypeptide is Thiamine-phosphate synthase (Thermoplasma acidophilum (strain ATCC 25905 / DSM 1728 / JCM 9062 / NBRC 15155 / AMRC-C165)).